Here is a 196-residue protein sequence, read N- to C-terminus: Recombination protein RecR (196 aa).

The segment at 57-72 (CERCHTFTQADICATC) adopts a C4-type zinc-finger fold. The 96-residue stretch at 80–175 (SKLCVVETPA…RLTRLARGVP (96 aa)) folds into the Toprim domain.

This sequence belongs to the RecR family.

In terms of biological role, may play a role in DNA repair. It seems to be involved in an RecBC-independent recombinational process of DNA repair. It may act with RecF and RecO. The polypeptide is Recombination protein RecR (Albidiferax ferrireducens (strain ATCC BAA-621 / DSM 15236 / T118) (Rhodoferax ferrireducens)).